A 101-amino-acid polypeptide reads, in one-letter code: MNVAEFHQKVEQVWQQIEEKIDDEALSIDTEIHGAVCTLTFDDESQIIINKQEAMLELWLASKLGGFHFAFRDGEWVTAEGRSFWTHLEEAFARHGEQISF.

The protein belongs to the frataxin family.

Involved in iron-sulfur (Fe-S) cluster assembly. May act as a regulator of Fe-S biogenesis. The polypeptide is Iron-sulfur cluster assembly protein CyaY (Actinobacillus pleuropneumoniae serotype 5b (strain L20)).